A 253-amino-acid chain; its full sequence is Phycoerythrobilin:ferredoxin oxidoreductase (253 aa).

It belongs to the HY2 family.

The catalysed reaction is (3Z)-phycoerythrobilin + oxidized 2[4Fe-4S]-[ferredoxin] = 15,16-dihydrobiliverdin + reduced 2[4Fe-4S]-[ferredoxin] + 2 H(+). Catalyzes the two-electron reduction of the C2 and C3(1) diene system of 15,16-dihydrobiliverdin. The protein is Phycoerythrobilin:ferredoxin oxidoreductase (pebB) of Prochlorococcus marinus (strain MIT 9215).